Reading from the N-terminus, the 311-residue chain is DNA-directed RNA polymerase subunit alpha (311 aa).

The alpha N-terminal domain (alpha-NTD) stretch occupies residues 1–227 (MNNISIKCLK…DLFTLLINNK (227 aa)). The segment at 242 to 311 (ISIEPYTNIA…LKNKLGIILK (70 aa)) is alpha C-terminal domain (alpha-CTD).

This sequence belongs to the RNA polymerase alpha chain family. In plastids the minimal PEP RNA polymerase catalytic core is composed of four subunits: alpha, beta, beta', and beta''. When a (nuclear-encoded) sigma factor is associated with the core the holoenzyme is formed, which can initiate transcription.

It localises to the plastid. The protein localises to the chloroplast. The catalysed reaction is RNA(n) + a ribonucleoside 5'-triphosphate = RNA(n+1) + diphosphate. DNA-dependent RNA polymerase catalyzes the transcription of DNA into RNA using the four ribonucleoside triphosphates as substrates. The polypeptide is DNA-directed RNA polymerase subunit alpha (Phaeodactylum tricornutum (strain CCAP 1055/1)).